We begin with the raw amino-acid sequence, 65 residues long: Prokaryotic ubiquitin-like protein Pup (65 aa).

Positions methionine 1–aspartate 38 are disordered. Residues aspartate 21–tyrosine 59 are ARC ATPase binding. A compositionally biased stretch (polar residues) spans alanine 22 to valine 34. Deamidated glutamine is present on glutamine 65. An Isoglutamyl lysine isopeptide (Gln-Lys) (interchain with K-? in acceptor proteins) cross-link involves residue glutamine 65.

It belongs to the prokaryotic ubiquitin-like protein family. Strongly interacts with the proteasome-associated ATPase ARC through a hydrophobic interface; the interacting region of Pup lies in its C-terminal half. There is one Pup binding site per ARC hexamer ring. Post-translationally, is modified by deamidation of its C-terminal glutamine to glutamate by the deamidase Dop, a prerequisite to the subsequent pupylation process.

It participates in protein degradation; proteasomal Pup-dependent pathway. Protein modifier that is covalently attached to lysine residues of substrate proteins, thereby targeting them for proteasomal degradation. The tagging system is termed pupylation. In Corynebacterium urealyticum (strain ATCC 43042 / DSM 7109), this protein is Prokaryotic ubiquitin-like protein Pup.